The following is a 321-amino-acid chain: D-alanine--D-alanine ligase (321 aa).

Residues 121-315 (RSWFLTNNIN…FTNLIEEIIK (195 aa)) enclose the ATP-grasp domain. An ATP-binding site is contributed by 147–199 (PVKRPYVIKPLTQGSSIGVEVIFEEDDFNFADYNFPYGYQVIIEQYIKGRELQ). Mg(2+) contacts are provided by Glu268, Glu282, and Asn284.

It belongs to the D-alanine--D-alanine ligase family. Mg(2+) serves as cofactor. It depends on Mn(2+) as a cofactor.

It is found in the cytoplasm. The enzyme catalyses 2 D-alanine + ATP = D-alanyl-D-alanine + ADP + phosphate + H(+). The protein operates within cell wall biogenesis; peptidoglycan biosynthesis. Cell wall formation. The polypeptide is D-alanine--D-alanine ligase (Rickettsia felis (strain ATCC VR-1525 / URRWXCal2) (Rickettsia azadi)).